The chain runs to 234 residues: 1-(5-phosphoribosyl)-5-[(5-phosphoribosylamino)methylideneamino] imidazole-4-carboxamide isomerase (234 aa).

The active-site Proton acceptor is aspartate 9. The active-site Proton donor is the aspartate 131.

This sequence belongs to the HisA/HisF family.

Its subcellular location is the cytoplasm. The catalysed reaction is 1-(5-phospho-beta-D-ribosyl)-5-[(5-phospho-beta-D-ribosylamino)methylideneamino]imidazole-4-carboxamide = 5-[(5-phospho-1-deoxy-D-ribulos-1-ylimino)methylamino]-1-(5-phospho-beta-D-ribosyl)imidazole-4-carboxamide. The protein operates within amino-acid biosynthesis; L-histidine biosynthesis; L-histidine from 5-phospho-alpha-D-ribose 1-diphosphate: step 4/9. The sequence is that of 1-(5-phosphoribosyl)-5-[(5-phosphoribosylamino)methylideneamino] imidazole-4-carboxamide isomerase from Staphylococcus aureus (strain MRSA252).